A 166-amino-acid chain; its full sequence is Lithostathine-1-alpha (166 aa).

A signal peptide spans Met-1–Gly-22. Position 23 is a pyrrolidone carboxylic acid (Gln-23). The O-linked (GalNAc) threonine glycan is linked to Thr-27. Residues Ile-34–Phe-164 form the C-type lectin domain. Cystine bridges form between Cys-36/Cys-47, Cys-64/Cys-162, and Cys-137/Cys-154.

In terms of processing, the composition of the O-linked carbohydrate on Thr-27 is complex and varied. In the crystallographic structure, the attached sugar appears to be N-acetylglucosamine, typical of an intracellular protein, rather than N-acetylgalactosamine. In pancreatic acinar cells and, in lower levels, in brain. Enhanced expression of PSP-related transcripts and intraneuronal accumulation of PSP-like proteins is found in brain from Alzheimer disease and Down syndrome patients.

The protein localises to the secreted. In terms of biological role, might act as an inhibitor of spontaneous calcium carbonate precipitation. May be associated with neuronal sprouting in brain, and with brain and pancreas regeneration. The polypeptide is Lithostathine-1-alpha (REG1A) (Homo sapiens (Human)).